The primary structure comprises 235 residues: Urease accessory protein UreF (235 aa).

The protein belongs to the UreF family. In terms of assembly, ureD, UreF and UreG form a complex that acts as a GTP-hydrolysis-dependent molecular chaperone, activating the urease apoprotein by helping to assemble the nickel containing metallocenter of UreC. The UreE protein probably delivers the nickel.

The protein resides in the cytoplasm. Functionally, required for maturation of urease via the functional incorporation of the urease nickel metallocenter. The protein is Urease accessory protein UreF of Haemophilus influenzae (strain ATCC 51907 / DSM 11121 / KW20 / Rd).